Consider the following 388-residue polypeptide: MSLTNKPSFGTLVNFYGTPQVPVEKNGYHVMELTLNIPKKLQTGGLLIVEKITVNVADVAYGARNNGFFTLGTAEAPNIYVIPPTVLLSNPVTDRALFNPQYSEDGVRLGWGSGLLGTEHELSAADLSVIKKLINGCTGKPEPVTRNIGKIEEAHLRLKTSESEAGAPVQCTRCNAMGKARAIPLGDSYVYRIPVHAADAQCKGAKGVAALVTEYDSGLCDLGRIMSLIRTFSTTAPTPIKRLVRESQKVFLEGGLCRGLGSFAIGDTSRFPIPVTFTGSKHRETIIPSELIDYIVQYYQYVDHVGDYVIDPARTQALRLTVYAHMARLGREIQCSVVTKVTFRQFPVNNHTELASWLKELSVYVKDAPVSDTVGLLSMENILALHDS.

This is an uncharacterized protein from Ictaluridae (bullhead catfishes).